A 481-amino-acid chain; its full sequence is Abl interactor 1 (481 aa).

Ala2 carries the post-translational modification N-acetylalanine. The required for binding to WASF1 stretch occupies residues 18-79 (ALIESYQNLT…NNVLQLLDIQ (62 aa)). The region spanning 45 to 107 (KALEETKAYT…DIHKEKVARR (63 aa)) is the t-SNARE coiled-coil homology domain. Residue Tyr53 is modified to Phosphotyrosine. Residues 158 to 285 (AKHGNNQPAR…PGAAPGSQYG (128 aa)) form a disordered region. Residues 161 to 175 (GNNQPARTGTLSRTN) are compositionally biased toward polar residues. Thr174 and Thr178 each carry phosphothreonine. Residues Ser183 and Ser187 each carry the phosphoserine modification. Tyr213 bears the Phosphotyrosine mark. At Thr215 the chain carries Phosphothreonine. A phosphoserine mark is found at Ser216, Ser222, and Ser225. A compositionally biased stretch (polar residues) spans 222-235 (SQHSPGRTASLNQR). 2 stretches are compositionally biased toward low complexity: residues 248–258 (SRENSGSSSIG) and 272–282 (GPAAPGAAPGS). 2 positions are modified to phosphoserine: Ser292 and Ser296. 2 disordered regions span residues 318–348 (AQPH…LTPQ) and 361–392 (NIAD…PPPV). 2 stretches are compositionally biased toward pro residues: residues 366–376 (PTPPPPPPPDD) and 383–392 (SPPPPPPPPV). In terms of domain architecture, SH3 spans 419–478 (NYIEKVVAIYDYTKDKDDELSFKEGAIIYVIKKNDDGWFEGVCNRVTGLFPGNYVESIMH). Tyr428 is subject to Phosphotyrosine. Phosphoserine is present on Ser439. A Phosphothreonine modification is found at Thr480.

Belongs to the ABI family. As to quaternary structure, interacts with ENAH, Abelson murine leukemia virus V-ABL, ABL1, STX1A, SNAP25, VAMP2, and through its N-terminus with WASF1. Part of a complex consisting of ABI1, STX1A and SNAP25. Part of a complex consisting of ABI1, EPS8 and SOS1. Interacts with EPS8, SOS1, SOS2, GRB2, SPTA1, and the first SH3 domain of NCK1. Component of the WAVE2 complex composed of ABI1, CYFIP1/SRA1, NCKAP1/NAP1 (NCKAP1l/HEM1 in hematopoietic cells) and WASF2/WAVE2. Interacts (via SH3 domain) with SHANK2 and SHANK3, but not SHANK1; the interaction is direct. Interacts with the heterodimer MYC:MAX; the interaction may enhance MYC:MAX transcriptional activity. Interacts with FNBP1L (via the SH3 domain), WASF2, and CDC42, but only in the presence of FNBP1L. In terms of processing, phosphorylated on tyrosine residues after serum stimulation or induction by v-Abl. Seems to be phosphorylated at Tyr-53 by ABL1, required for nuclear but not for synaptic localization. In terms of tissue distribution, widely expressed with highest levels in bone marrow, spleen, brain, testes, and embryonic brain. In adult brain prominently expressed in the neocortex, hippocampus and dentate gyrus.

It localises to the cytoplasm. The protein localises to the nucleus. The protein resides in the cell projection. It is found in the lamellipodium. Its subcellular location is the filopodium. It localises to the growth cone. The protein localises to the postsynaptic density. The protein resides in the cytoskeleton. Functionally, may act in negative regulation of cell growth and transformation by interacting with nonreceptor tyrosine kinases ABL1 and/or ABL2. In vitro, at least isoform 2 and isoform 4 suppress the transforming activity of Abelson murine leukemia virus (v-Abl) after overexpression in fibroblasts. May play a role in regulation EGF-induced Erk pathway activation. Involved in cytoskeletal reorganization and EGFR signaling. Together with EPS8 participates in transduction of signals from Ras to Rac. In vitro, a trimeric complex of ABI1, EPS8 and SOS1 exhibits Rac specific guanine nucleotide exchange factor (GEF) activity and ABI1 seems to act as an adapter in the complex. Regulates ABL1/c-Abl-mediated phosphorylation of ENAH. Recruits WASF1 to lamellipodia and there seems to regulate WASF1 protein level. In brain, seems to regulate the dendritic outgrowth and branching as well as to determine the shape and number of synaptic contacts of developing neurons. The polypeptide is Abl interactor 1 (Mus musculus (Mouse)).